Here is a 334-residue protein sequence, read N- to C-terminus: Holliday junction branch migration complex subunit RuvB (334 aa).

The segment at 4-186 is large ATPase domain (RuvB-L); that stretch reads ADRLIAPISN…FGIVQRLEYY (183 aa). ATP-binding positions include Ile25, Arg26, Gly67, Lys70, Thr71, Thr72, 133–135, Arg176, Tyr186, and Arg223; that span reads EDY. A Mg(2+)-binding site is contributed by Thr71. Positions 187–257 are small ATPAse domain (RuvB-S); sequence KVADLQHIVQ…TADRALNMLD (71 aa). The tract at residues 260-334 is head domain (RuvB-H); that stretch reads HQGFDYMDRK…RAYLHFGIEK (75 aa). Residues Arg315 and Arg320 each coordinate DNA.

Belongs to the RuvB family. In terms of assembly, homohexamer. Forms an RuvA(8)-RuvB(12)-Holliday junction (HJ) complex. HJ DNA is sandwiched between 2 RuvA tetramers; dsDNA enters through RuvA and exits via RuvB. An RuvB hexamer assembles on each DNA strand where it exits the tetramer. Each RuvB hexamer is contacted by two RuvA subunits (via domain III) on 2 adjacent RuvB subunits; this complex drives branch migration. In the full resolvosome a probable DNA-RuvA(4)-RuvB(12)-RuvC(2) complex forms which resolves the HJ.

The protein resides in the cytoplasm. It catalyses the reaction ATP + H2O = ADP + phosphate + H(+). Functionally, the RuvA-RuvB-RuvC complex processes Holliday junction (HJ) DNA during genetic recombination and DNA repair, while the RuvA-RuvB complex plays an important role in the rescue of blocked DNA replication forks via replication fork reversal (RFR). RuvA specifically binds to HJ cruciform DNA, conferring on it an open structure. The RuvB hexamer acts as an ATP-dependent pump, pulling dsDNA into and through the RuvAB complex. RuvB forms 2 homohexamers on either side of HJ DNA bound by 1 or 2 RuvA tetramers; 4 subunits per hexamer contact DNA at a time. Coordinated motions by a converter formed by DNA-disengaged RuvB subunits stimulates ATP hydrolysis and nucleotide exchange. Immobilization of the converter enables RuvB to convert the ATP-contained energy into a lever motion, pulling 2 nucleotides of DNA out of the RuvA tetramer per ATP hydrolyzed, thus driving DNA branch migration. The RuvB motors rotate together with the DNA substrate, which together with the progressing nucleotide cycle form the mechanistic basis for DNA recombination by continuous HJ branch migration. Branch migration allows RuvC to scan DNA until it finds its consensus sequence, where it cleaves and resolves cruciform DNA. This Vibrio cholerae serotype O1 (strain ATCC 39315 / El Tor Inaba N16961) protein is Holliday junction branch migration complex subunit RuvB.